The following is a 419-amino-acid chain: Serine hydroxymethyltransferase (419 aa).

Residues Leu-121 and 125–127 contribute to the (6S)-5,6,7,8-tetrahydrofolate site; that span reads GHL. Residue Lys-231 is modified to N6-(pyridoxal phosphate)lysine.

The protein belongs to the SHMT family. In terms of assembly, homodimer. It depends on pyridoxal 5'-phosphate as a cofactor.

Its subcellular location is the cytoplasm. It catalyses the reaction (6R)-5,10-methylene-5,6,7,8-tetrahydrofolate + glycine + H2O = (6S)-5,6,7,8-tetrahydrofolate + L-serine. It participates in one-carbon metabolism; tetrahydrofolate interconversion. The protein operates within amino-acid biosynthesis; glycine biosynthesis; glycine from L-serine: step 1/1. Catalyzes the reversible interconversion of serine and glycine with tetrahydrofolate (THF) serving as the one-carbon carrier. This reaction serves as the major source of one-carbon groups required for the biosynthesis of purines, thymidylate, methionine, and other important biomolecules. Also exhibits THF-independent aldolase activity toward beta-hydroxyamino acids, producing glycine and aldehydes, via a retro-aldol mechanism. This Phytoplasma mali (strain AT) protein is Serine hydroxymethyltransferase.